The primary structure comprises 108 residues: U-scoloptoxin(16)-Sm1a (108 aa).

An N-terminal signal peptide occupies residues 1-19 (MNLFLVLFVFSFSVSQFFA).

Belongs to the scoloptoxin-16 family. Contains 4 disulfide bonds. As to expression, expressed by the venom gland.

It is found in the secreted. This Scolopendra morsitans (Tanzanian blue ringleg centipede) protein is U-scoloptoxin(16)-Sm1a.